The following is a 618-amino-acid chain: Matrix metalloproteinase-24 (618 aa).

The signal sequence occupies residues 1–41; that stretch reads MPRSRGGRAAPGQAARWSGWRAPGRLLPLLPALCCLAAAAG. Positions 42–128 are excised as a propeptide; it reads AGKPAGADAP…HLSRRRRNKR (87 aa). At 42 to 575 the chain is on the extracellular side; it reads AGKPAGADAP…IDDVPGSVNA (534 aa). The short motif at 110-117 is the Cysteine switch element; the sequence is PRCGVPDH. Residues C112 and H255 each contribute to the Zn(2+) site. E256 is an active-site residue. Zn(2+) is bound by residues H259 and H265. A disordered region spans residues 296–352; it reads QKIYGPPAEPLEPTRPLPTLPVRRIHSPSERKHERQPRPPRPPLGDRPSTPGAKPNI. Positions 302 to 314 are enriched in pro residues; it reads PAEPLEPTRPLPT. Residues 322–332 show a composition bias toward basic and acidic residues; sequence SPSERKHERQP. Hemopexin repeat units lie at residues 350-398, 399-444, 446-494, and 495-542; these read PNIC…WKGL, PARI…GSCL, REGI…KGIP, and QAPQ…WMGC. C353 and C542 are disulfide-bonded. Residues 576–596 traverse the membrane as a helical segment; the sequence is VAVVVPCTLSLCLLVLLYTIF. Residues 597–618 are Cytoplasmic-facing; the sequence is QFKNKTGPQPVTYYKRPVQEWV. The PDZ-binding motif lies at 616–618; it reads EWV.

It belongs to the peptidase M10A family. As to quaternary structure, interacts (via PDZ-binding motif) with APBA3 (via PDZ domain). Interacts with GRIP1 and GRIP2. Requires Zn(2+) as cofactor. It depends on Ca(2+) as a cofactor. Cleaved by a furin endopeptidase in the trans-Golgi network. In terms of tissue distribution, predominantly expressed in the nervous system: while enriched in the central nervous system, expression is also detected in the peripheral nervous system, including the trigeminal ganglion. Expression is not restricted to the nervous system: it is also enriched in the thymus, with a lower level of expression present in the aorta. In brain, high expression is present in the brain parenchyma, particularly within the neocortex.

The protein resides in the cell membrane. It is found in the golgi apparatus. The protein localises to the trans-Golgi network membrane. It localises to the secreted. Its subcellular location is the extracellular space. The protein resides in the extracellular matrix. Its function is as follows. Metalloprotease that mediates cleavage of N-cadherin (CDH2) and acts as a regulator of neuro-immune interactions and neural stem cell quiescence. Involved in cell-cell interactions between nociceptive neurites and mast cells, possibly by mediating cleavage of CDH2, thereby acting as a mediator of peripheral thermal nociception and inflammatory hyperalgesia. Key regulator of neural stem cells quiescence by mediating cleavage of CDH2, affecting CDH2-mediated anchorage of neural stem cells to ependymocytes in the adult subependymal zone, leading to modulate their quiescence. May play a role in axonal growth. Able to activate progelatinase A. May also be a proteoglycanase involved in degradation of proteoglycans, such as dermatan sulfate and chondroitin sulfate proteoglycans. Cleaves partially fibronectin, but not collagen type I, nor laminin. In Rattus norvegicus (Rat), this protein is Matrix metalloproteinase-24 (Mmp24).